The following is a 201-amino-acid chain: Ribosome maturation factor RimP (201 aa).

This sequence belongs to the RimP family.

Its subcellular location is the cytoplasm. Its function is as follows. Required for maturation of 30S ribosomal subunits. The protein is Ribosome maturation factor RimP of Acidobacterium capsulatum (strain ATCC 51196 / DSM 11244 / BCRC 80197 / JCM 7670 / NBRC 15755 / NCIMB 13165 / 161).